The sequence spans 106 residues: Cell division protein FtsB (106 aa).

At 1-3 (MGK) the chain is on the cytoplasmic side. The chain crosses the membrane as a helical span at residues 4–21 (LTLLLLALLGWLQYSLWL). The Periplasmic segment spans residues 22-106 (GKNGVHDYVR…ASSSQNNLQK (85 aa)). A coiled-coil region spans residues 40-62 (QGSNAKLKARNDQLFAEIDDLNG).

This sequence belongs to the FtsB family. As to quaternary structure, part of a complex composed of FtsB, FtsL and FtsQ.

Its subcellular location is the cell inner membrane. In terms of biological role, essential cell division protein. May link together the upstream cell division proteins, which are predominantly cytoplasmic, with the downstream cell division proteins, which are predominantly periplasmic. The chain is Cell division protein FtsB from Serratia proteamaculans (strain 568).